The sequence spans 145 residues: Ribosome maturation factor RimP (145 aa).

This sequence belongs to the RimP family.

Its subcellular location is the cytoplasm. Required for maturation of 30S ribosomal subunits. The polypeptide is Ribosome maturation factor RimP (Borreliella afzelii (strain PKo) (Borrelia afzelii)).